The following is a 217-amino-acid chain: Protein LURP-one-related 2 (217 aa).

This sequence belongs to the LOR family.

In terms of biological role, might be related to the phospholipid scramblase and tubby-like superfamily of membrane tethered transcription factors. In Arabidopsis thaliana (Mouse-ear cress), this protein is Protein LURP-one-related 2.